The following is a 142-amino-acid chain: Hemoglobin subunit alpha-A (142 aa).

One can recognise a Globin domain in the interval 2–142; it reads VLSAADKTNV…VGTVLTAKYR (141 aa). H59 lines the O2 pocket. Residue H88 coordinates heme b.

It belongs to the globin family. As to quaternary structure, heterotetramer of two alpha chains and two beta chains. As to expression, red blood cells.

In terms of biological role, involved in oxygen transport from the lung to the various peripheral tissues. The protein is Hemoglobin subunit alpha-A (HBAA) of Coturnix japonica (Japanese quail).